We begin with the raw amino-acid sequence, 207 residues long: Uracil phosphoribosyltransferase (207 aa).

Residues Arg77, Arg102, and 129-137 (DPMLATGGS) each bind 5-phospho-alpha-D-ribose 1-diphosphate. Uracil contacts are provided by residues Ile192 and 197–199 (GDA). Asp198 is a 5-phospho-alpha-D-ribose 1-diphosphate binding site.

Belongs to the UPRTase family. Mg(2+) serves as cofactor.

It catalyses the reaction UMP + diphosphate = 5-phospho-alpha-D-ribose 1-diphosphate + uracil. It functions in the pathway pyrimidine metabolism; UMP biosynthesis via salvage pathway; UMP from uracil: step 1/1. Its activity is regulated as follows. Allosterically activated by GTP. Its function is as follows. Catalyzes the conversion of uracil and 5-phospho-alpha-D-ribose 1-diphosphate (PRPP) to UMP and diphosphate. This is Uracil phosphoribosyltransferase from Mesoplasma florum (strain ATCC 33453 / NBRC 100688 / NCTC 11704 / L1) (Acholeplasma florum).